The following is a 592-amino-acid chain: Calnexin (592 aa).

Positions 1–20 are cleaved as a signal peptide; the sequence is MEGKWLLCMLLVLGTAIVEA. The Lumenal segment spans residues 21–481; sequence HDGHDDDVID…QMIEAAEERP (461 aa). 2 residues coordinate Ca(2+): Ser-74 and Asp-117. An N6-acetyllysine modification is found at Lys-137. An intrachain disulfide couples Cys-160 to Cys-194. Tyr-164, Lys-166, Tyr-185, and Asp-192 together coordinate an alpha-D-glucoside. The interval 260–345 is disordered; the sequence is GNLLNDMTPP…AEKPEDWDED (86 aa). The span at 274-319 shows a compositional bias: basic and acidic residues; it reads REIEDPEDRKPEDWDERPKIPDPEAVKPDDWDEDAPAKIPDEEATK. The tract at residues 276-409 is p domain (Extended arm); that stretch reads IEDPEDRKPE…RKIPNPDFFE (134 aa). 5 repeat units span residues 278-290, 295-307, 314-326, 333-345, and 348-358. 4 X approximate repeats stretches follow at residues 278 to 345 and 348 to 405; these read DPED…WDED and GEWE…IPNP. The span at 323–345 shows a compositional bias: acidic residues; the sequence is WLDDEPEYVPDPDAEKPEDWDED. Residues 326–359 are interaction with PPIB; that stretch reads DEPEYVPDPDAEKPEDWDEDMDGEWEAPQIANPK. An intrachain disulfide couples Cys-360 to Cys-366. Repeat copies occupy residues 367 to 377, 381 to 391, and 395 to 405. Residue Glu-425 coordinates an alpha-D-glucoside. Asp-436 is a binding site for Ca(2+). A helical membrane pass occupies residues 482 to 502; sequence WLWVVYILTVALPVFLVILFC. 2 S-palmitoyl cysteine lipidation sites follow: Cys-502 and Cys-503. Residues 503-592 are Cytoplasmic-facing; it reads CSGKKQTSAM…SPRNRKPRRE (90 aa). The tract at residues 503–592 is sufficient to mediate interaction with SGIP1; that stretch reads CSGKKQTSAM…SPRNRKPRRE (90 aa). Positions 511 to 592 are disordered; the sequence is AMEYKKTDAP…SPRNRKPRRE (82 aa). Residues 525-547 are compositionally biased toward acidic residues; the sequence is KEEEEEKEEEKDKGDEEEEGEEK. The residue at position 554 (Ser-554) is a Phosphoserine. Thr-562 carries the post-translational modification Phosphothreonine. At Ser-564 the chain carries Phosphoserine; by MAPK3. At Ser-583 the chain carries Phosphoserine.

The protein belongs to the calreticulin family. Interacts with MAPK3/ERK1. Interacts with KCNH2. Associates with ribosomes. Interacts with SGIP1; involved in negative regulation of endocytosis. The palmitoylated form interacts with the ribosome-translocon complex component SSR1, promoting efficient folding of glycoproteins. Interacts with SERPINA2P/SERPINA2 and with the S and Z variants of SERPINA1. Interacts with PPIB. Interacts with ZNRF4. Interacts with SMIM22. Interacts with TMX2. Interacts with TMEM35A/NACHO and CHRNA7. Interacts with reticulophagy regulators RETREG2 and RETREG3. Interacts with DNM1L; may form part of a larger protein complex at the ER-mitochondrial interface during mitochondrial fission. Interacts with ADAM7. Phosphorylated at Ser-564 by MAPK3/ERK1. Phosphorylation by MAPK3/ERK1 increases its association with ribosomes. Post-translationally, palmitoylation by DHHC6 leads to the preferential localization to the perinuclear rough ER. It mediates the association of calnexin with the ribosome-translocon complex (RTC) which is required for efficient folding of glycosylated proteins. In terms of processing, ubiquitinated, leading to proteasomal degradation. Probably ubiquitinated by ZNRF4.

The protein resides in the endoplasmic reticulum membrane. The protein localises to the mitochondrion membrane. It localises to the melanosome membrane. Functionally, calcium-binding protein that interacts with newly synthesized monoglucosylated glycoproteins in the endoplasmic reticulum. It may act in assisting protein assembly and/or in the retention within the ER of unassembled protein subunits. It seems to play a major role in the quality control apparatus of the ER by the retention of incorrectly folded proteins. Associated with partial T-cell antigen receptor complexes that escape the ER of immature thymocytes, it may function as a signaling complex regulating thymocyte maturation. Additionally it may play a role in receptor-mediated endocytosis at the synapse. This chain is Calnexin (CANX), found in Pongo abelii (Sumatran orangutan).